The primary structure comprises 130 residues: Small ribosomal subunit protein uS9 (130 aa).

Positions 109-130 (RMKERKKYGLKAARRAPQFSKR) are disordered. The segment covering 111 to 130 (KERKKYGLKAARRAPQFSKR) has biased composition (basic residues).

This sequence belongs to the universal ribosomal protein uS9 family.

This Lachnoclostridium phytofermentans (strain ATCC 700394 / DSM 18823 / ISDg) (Clostridium phytofermentans) protein is Small ribosomal subunit protein uS9.